The chain runs to 395 residues: NAD(P)H-quinone oxidoreductase subunit H (395 aa).

The protein belongs to the complex I 49 kDa subunit family. In terms of assembly, NDH-1 can be composed of about 15 different subunits; different subcomplexes with different compositions have been identified which probably have different functions.

It is found in the cellular thylakoid membrane. It carries out the reaction a plastoquinone + NADH + (n+1) H(+)(in) = a plastoquinol + NAD(+) + n H(+)(out). It catalyses the reaction a plastoquinone + NADPH + (n+1) H(+)(in) = a plastoquinol + NADP(+) + n H(+)(out). Its function is as follows. NDH-1 shuttles electrons from an unknown electron donor, via FMN and iron-sulfur (Fe-S) centers, to quinones in the respiratory and/or the photosynthetic chain. The immediate electron acceptor for the enzyme in this species is believed to be plastoquinone. Couples the redox reaction to proton translocation, and thus conserves the redox energy in a proton gradient. Cyanobacterial NDH-1 also plays a role in inorganic carbon-concentration. In Prochlorococcus marinus subsp. pastoris (strain CCMP1986 / NIES-2087 / MED4), this protein is NAD(P)H-quinone oxidoreductase subunit H.